Consider the following 424-residue polypeptide: S-adenosylmethionine synthase (424 aa).

Histidine 14 lines the ATP pocket. Aspartate 16 is a binding site for Mg(2+). Glutamate 42 provides a ligand contact to K(+). L-methionine contacts are provided by glutamate 55 and glutamine 98. The segment at 98–108 is flexible loop; that stretch reads QSNDISRGIER. ATP-binding positions include 165–167, 242–243, aspartate 251, 257–258, alanine 274, and lysine 278; these read DAK, KF, and RK. Residue aspartate 251 participates in L-methionine binding. Position 282 (lysine 282) interacts with L-methionine.

It belongs to the AdoMet synthase family. Homotetramer; dimer of dimers. Mg(2+) is required as a cofactor. It depends on K(+) as a cofactor.

It localises to the cytoplasm. It carries out the reaction L-methionine + ATP + H2O = S-adenosyl-L-methionine + phosphate + diphosphate. It participates in amino-acid biosynthesis; S-adenosyl-L-methionine biosynthesis; S-adenosyl-L-methionine from L-methionine: step 1/1. Its function is as follows. Catalyzes the formation of S-adenosylmethionine (AdoMet) from methionine and ATP. The overall synthetic reaction is composed of two sequential steps, AdoMet formation and the subsequent tripolyphosphate hydrolysis which occurs prior to release of AdoMet from the enzyme. In Azobacteroides pseudotrichonymphae genomovar. CFP2, this protein is S-adenosylmethionine synthase.